We begin with the raw amino-acid sequence, 259 residues long: Pyridoxine 5'-phosphate synthase (259 aa).

Residue N6 participates in 3-amino-2-oxopropyl phosphate binding. Residue 8–9 (DH) participates in 1-deoxy-D-xylulose 5-phosphate binding. R17 serves as a coordination point for 3-amino-2-oxopropyl phosphate. The active-site Proton acceptor is the H42. 1-deoxy-D-xylulose 5-phosphate is bound by residues R44 and H49. Residue E69 is the Proton acceptor of the active site. T99 is a binding site for 1-deoxy-D-xylulose 5-phosphate. The Proton donor role is filled by H212. Residues G213 and 234–235 (GH) each bind 3-amino-2-oxopropyl phosphate.

This sequence belongs to the PNP synthase family. In terms of assembly, homooctamer; tetramer of dimers.

The protein localises to the cytoplasm. It catalyses the reaction 3-amino-2-oxopropyl phosphate + 1-deoxy-D-xylulose 5-phosphate = pyridoxine 5'-phosphate + phosphate + 2 H2O + H(+). It functions in the pathway cofactor biosynthesis; pyridoxine 5'-phosphate biosynthesis; pyridoxine 5'-phosphate from D-erythrose 4-phosphate: step 5/5. Catalyzes the complicated ring closure reaction between the two acyclic compounds 1-deoxy-D-xylulose-5-phosphate (DXP) and 3-amino-2-oxopropyl phosphate (1-amino-acetone-3-phosphate or AAP) to form pyridoxine 5'-phosphate (PNP) and inorganic phosphate. The polypeptide is Pyridoxine 5'-phosphate synthase (Nautilia profundicola (strain ATCC BAA-1463 / DSM 18972 / AmH)).